Here is a 472-residue protein sequence, read N- to C-terminus: Eukaryotic translation initiation factor 2 subunit 3B (472 aa).

Ala2 bears the N-acetylalanine mark. The residue at position 16 (Ser16) is a Phosphoserine. Positions 39 to 248 (QATINIGTIG…IVKKIPVPPR (210 aa)) constitute a tr-type G domain. A G1 region spans residues 48 to 55 (GHVAHGKS). A GTP-binding site is contributed by 51–56 (AHGKST). The segment at 76–80 (NITIK) is G2. Residues 134–137 (DCPG) are G3. GTP is bound by residues 190 to 193 (NKID) and 225 to 227 (SAQ). A G4 region spans residues 190–193 (NKID). Positions 225–227 (SAQ) are G5.

This sequence belongs to the TRAFAC class translation factor GTPase superfamily. Classic translation factor GTPase family. EIF2G subfamily. In terms of assembly, eIF2 is a heterotrimer composed of an alpha, a beta and a gamma chain. eIF2 is member of the 43S pre-initiation complex (43S PIC). In terms of tissue distribution, specifically expressed in testis at the mRNA level.

The enzyme catalyses GTP + H2O = GDP + phosphate + H(+). Functionally, member of the eIF2 complex that functions in the early steps of protein synthesis by forming a ternary complex with GTP and initiator tRNA. This complex binds to a 40S ribosomal subunit, followed by mRNA binding to form the 43S pre-initiation complex (43S PIC). Junction of the 60S ribosomal subunit to form the 80S initiation complex is preceded by hydrolysis of the GTP bound to eIF2 and release of an eIF2-GDP binary complex. In order for eIF2 to recycle and catalyze another round of initiation, the GDP bound to eIF2 must exchange with GTP by way of a reaction catalyzed by eIF-2B. The polypeptide is Eukaryotic translation initiation factor 2 subunit 3B (Homo sapiens (Human)).